Reading from the N-terminus, the 113-residue chain is Iron-sulfur cluster insertion protein ErpA (113 aa).

Iron-sulfur cluster-binding residues include Cys41, Cys105, and Cys107.

The protein belongs to the HesB/IscA family. In terms of assembly, homodimer. Iron-sulfur cluster serves as cofactor.

In terms of biological role, required for insertion of 4Fe-4S clusters for at least IspG. This is Iron-sulfur cluster insertion protein ErpA from Actinobacillus pleuropneumoniae serotype 7 (strain AP76).